Here is a 442-residue protein sequence, read N- to C-terminus: MSEIGSYHDTIFALSSGRLPSGVAVIRISGPKTRFVYETIRQAIPEPRHAALLTFRSRNGDAIDRGLTLFFPAPHSFTGEDCAEFHLHGGKAVVEKMLAVLGELPGCRIAEAGEFTRRAFANGKMDLTIAEGLADLIAAETEGQRRLAMQVASGNQRKLYSEWRQRLINARAFIEAELDFADESDVPGSVSMQVWQQLSALKHEIEHHIASGKRAAMLRDGLHVVIVGAPNAGKSSLLNFLAGRDVAIISEEAGTTRDLLEVKLDLGGIPVYVTDTAGLRETDSVVEKIGIERARARMAEADLVLSLEDMSGPVSVTVEKIEAETWLIGTKADLGGSASGLWKYHISTMTGSGLEQLLDALQAFAEAKIGQIEDAVPTRQRHINLLRATIEEIEKAIEGDDLPLELRAENMRLASQFLGRITGDVDVEEILDVIFSQFCIGK.

(6S)-5-formyl-5,6,7,8-tetrahydrofolate is bound by residues Arg27, Glu84, and Lys124. In terms of domain architecture, TrmE-type G spans 221 to 366; it reads GLHVVIVGAP…LLDALQAFAE (146 aa). Residues 231–236, 250–256, and 275–278 each bind GTP; these read NAGKSS, SEEAGTT, and DTAG. Residues Ser235 and Thr256 each coordinate Mg(2+). Lys442 provides a ligand contact to (6S)-5-formyl-5,6,7,8-tetrahydrofolate.

It belongs to the TRAFAC class TrmE-Era-EngA-EngB-Septin-like GTPase superfamily. TrmE GTPase family. Homodimer. Heterotetramer of two MnmE and two MnmG subunits. The cofactor is K(+).

The protein resides in the cytoplasm. Its function is as follows. Exhibits a very high intrinsic GTPase hydrolysis rate. Involved in the addition of a carboxymethylaminomethyl (cmnm) group at the wobble position (U34) of certain tRNAs, forming tRNA-cmnm(5)s(2)U34. This Brucella ovis (strain ATCC 25840 / 63/290 / NCTC 10512) protein is tRNA modification GTPase MnmE.